The chain runs to 196 residues: Large ribosomal subunit protein uL10 (196 aa).

The interval K169–E196 is disordered. Residues E172–E196 show a composition bias toward low complexity.

It belongs to the universal ribosomal protein uL10 family. Part of the ribosomal stalk of the 50S ribosomal subunit. The N-terminus interacts with L11 and the large rRNA to form the base of the stalk. The C-terminus forms an elongated spine to which L12 dimers bind in a sequential fashion forming a multimeric L10(L12)X complex.

Functionally, forms part of the ribosomal stalk, playing a central role in the interaction of the ribosome with GTP-bound translation factors. This is Large ribosomal subunit protein uL10 from Mycobacterium avium (strain 104).